A 499-amino-acid polypeptide reads, in one-letter code: MEILSLLSYSVFYLALFFIFNIVIRARKFKNLPPGPPSLPIIGNLHHLKRPLHRTFKGLSEKYGHVFSLWFGSRLVVVVSSASEFQQCFTKNDVVLANRPRFLSGKYIFYNYTTLGSTSYGEHWRNLRRITALDVLSNHRINSFSGIRRDETQRLITRLADDSSTNFAEMELSSRLYDMTFNNIMRMISGKRYYGEDCDTSDLQEASQFRDMVSELLQLSGANNKTDFMPLLRFLDFENLEKRLKDISGKTDAFLRGLIEEHRTKKERANTMIDHLLNLQDSQPEYYTDQIIKGLALAMLLAGTDSSAVTLEWSMSNLLNHPEVLKKVKDELDTHVGQDRLVDESDLPKLTYLKNVINETLRLYTPAPLLLPHSTSDECNIGGYKVPQDTIVLINAWAIHRDPELWTEATTFKPERFEKKGELEKLIAFGMGRRACPGEGLAIRAISMTLALLIQCFDWKLINGDKIDLAERDGFTLTKLVPLKAMCKSRPVINKVFKQ.

Cys-436 contacts heme.

The protein belongs to the cytochrome P450 family. The cofactor is heme.

The protein localises to the membrane. It catalyses the reaction a 2'-unsubstituted isoflavone + reduced [NADPH--hemoprotein reductase] + O2 = a 2'-hydroxyisoflavone + oxidized [NADPH--hemoprotein reductase] + H2O + H(+). Its function is as follows. Catalyzes the hydroxylation of isoflavones, daidzein and formononetin, to yield 2'-hydroxyisoflavones, 2'-hydroxydaidzein, and 2'-hydroxyformononetin, respectively. The sequence is that of Isoflavone 2'-hydroxylase (CYP81E1) from Glycyrrhiza echinata (Licorice).